A 409-amino-acid chain; its full sequence is Elongation factor Tu (409 aa).

One can recognise a tr-type G domain in the interval 10-214 (KPHANIGTIG…EVDAYIPTPE (205 aa)). Residues 19–26 (GHVDHGKT) form a G1 region. 19–26 (GHVDHGKT) serves as a coordination point for GTP. Thr26 contributes to the Mg(2+) binding site. A G2 region spans residues 60–64 (GITIN). The interval 81–84 (DCPG) is G3. GTP is bound by residues 81–85 (DCPGH) and 136–139 (NKED). Positions 136–139 (NKED) are G4. The G5 stretch occupies residues 174–176 (SAL).

It belongs to the TRAFAC class translation factor GTPase superfamily. Classic translation factor GTPase family. EF-Tu/EF-1A subfamily. As to quaternary structure, monomer.

It localises to the cytoplasm. It carries out the reaction GTP + H2O = GDP + phosphate + H(+). GTP hydrolase that promotes the GTP-dependent binding of aminoacyl-tRNA to the A-site of ribosomes during protein biosynthesis. This Synechococcus elongatus (strain ATCC 33912 / PCC 7942 / FACHB-805) (Anacystis nidulans R2) protein is Elongation factor Tu.